We begin with the raw amino-acid sequence, 316 residues long: Ornithine carbamoyltransferase (316 aa).

Carbamoyl phosphate is bound by residues 57-60 (STRT), glutamine 84, arginine 108, and 135-138 (HPCQ). L-ornithine contacts are provided by residues asparagine 166, aspartate 230, and 234-235 (SM). Residues 269–270 (CL) and arginine 297 each bind carbamoyl phosphate.

Belongs to the aspartate/ornithine carbamoyltransferase superfamily. OTCase family.

The protein resides in the cytoplasm. It catalyses the reaction carbamoyl phosphate + L-ornithine = L-citrulline + phosphate + H(+). The protein operates within amino-acid biosynthesis; L-arginine biosynthesis; L-arginine from L-ornithine and carbamoyl phosphate: step 1/3. Reversibly catalyzes the transfer of the carbamoyl group from carbamoyl phosphate (CP) to the N(epsilon) atom of ornithine (ORN) to produce L-citrulline. This Bacillus cereus (strain ZK / E33L) protein is Ornithine carbamoyltransferase.